An 85-amino-acid polypeptide reads, in one-letter code: Sec-independent protein translocase protein TatA (85 aa).

Residues 1-21 (MGGISIWQLLIIALIVVLLFG) traverse the membrane as a helical segment. The interval 43 to 85 (MSSEEDKKALEDAEAAKPVQTAQTAQPTQQATEKKPESNKEQA) is disordered. The segment covering 46 to 57 (EEDKKALEDAEA) has biased composition (basic and acidic residues). Residues 58–73 (AKPVQTAQTAQPTQQA) show a composition bias toward low complexity. Over residues 74 to 85 (TEKKPESNKEQA) the composition is skewed to basic and acidic residues.

It belongs to the TatA/E family. In terms of assembly, the Tat system comprises two distinct complexes: a TatABC complex, containing multiple copies of TatA, TatB and TatC subunits, and a separate TatA complex, containing only TatA subunits. Substrates initially bind to the TatABC complex, which probably triggers association of the separate TatA complex to form the active translocon.

It localises to the cell inner membrane. Functionally, part of the twin-arginine translocation (Tat) system that transports large folded proteins containing a characteristic twin-arginine motif in their signal peptide across membranes. TatA could form the protein-conducting channel of the Tat system. The chain is Sec-independent protein translocase protein TatA from Shewanella sp. (strain MR-4).